A 606-amino-acid chain; its full sequence is MSSKILLTNLRTSASFCKTLKFPQRPRTPFIASQQSCAIHVDNPPSIPTLTTSYVHGLSSHPLQSSTVDQCLQATVERYPDREAMVFVQDGIRKTFAEFYQDVEKAAAGLLAAGLKRGDRLGMWGPNIYEWVLMQFATAKAGIILVAVNPAYQLQEVEFALRKVQCNAVVCPTKFKSQHYCDMLKQLCPEMETASPGGIKSSRLPDLHTVIVTDSQQPGSFLLKDLMQAGSSQHYQQLQDLQKKLVCDDPINIQFTSGTTGKPKGATLSHHNIVNNAYFTGMRIGYNWRKNVRICLPVPLYHCFGSVGGGVIMALYGTTVIFPSTGYDGRANLRAIEKEKCTFVYGTPTMYIDMLGQPDLAKFDLSSVRGGIAAGSPCPPEVMRKILNVMGIKEMVIGYGTTENSPVTFCGFPVDSAERKIVTVGCISPHTEAKVVDPTTGEIVPLGAQGELMIRGYCVMLEYWQDEEKTRECITKDRWYKTGDIASLDQFAYCKIEGRIKDLIIRGGENIYPAEIEQFLHTHPKILEAQVVGVKDERMGEEVCACIRLKEGQECTVEEIKAYCKGKIAHYKVPRYILFVQDYPLTITGKIQKHKLRERTEKQLGL.

The transit peptide at 1 to 13 directs the protein to the mitochondrion; it reads MSSKILLTNLRTS. ATP-binding positions include 256-264, Asp484, Arg499, and Lys590; that span reads TSGTTGKPK.

This sequence belongs to the ATP-dependent AMP-binding enzyme family.

Its subcellular location is the mitochondrion. It carries out the reaction a medium-chain fatty acid + ATP + CoA = a medium-chain fatty acyl-CoA + AMP + diphosphate. The catalysed reaction is octanoate + ATP + CoA = octanoyl-CoA + AMP + diphosphate. In terms of biological role, acyl-CoA synthases catalyze the initial reaction in fatty acid metabolism, by forming a thioester with CoA. Has some preference toward medium-chain substrates. Plays a role in adipocyte differentiation. This chain is Medium-chain acyl-CoA ligase ACSF2, mitochondrial, found in Danio rerio (Zebrafish).